The sequence spans 218 residues: Probable nicotinate-nucleotide adenylyltransferase (218 aa).

This sequence belongs to the NadD family.

The enzyme catalyses nicotinate beta-D-ribonucleotide + ATP + H(+) = deamido-NAD(+) + diphosphate. Its pathway is cofactor biosynthesis; NAD(+) biosynthesis; deamido-NAD(+) from nicotinate D-ribonucleotide: step 1/1. Its function is as follows. Catalyzes the reversible adenylation of nicotinate mononucleotide (NaMN) to nicotinic acid adenine dinucleotide (NaAD). This is Probable nicotinate-nucleotide adenylyltransferase from Corynebacterium glutamicum (strain ATCC 13032 / DSM 20300 / JCM 1318 / BCRC 11384 / CCUG 27702 / LMG 3730 / NBRC 12168 / NCIMB 10025 / NRRL B-2784 / 534).